The following is a 120-amino-acid chain: Large ribosomal subunit protein bL19 (120 aa).

The protein belongs to the bacterial ribosomal protein bL19 family.

Its function is as follows. This protein is located at the 30S-50S ribosomal subunit interface and may play a role in the structure and function of the aminoacyl-tRNA binding site. The polypeptide is Large ribosomal subunit protein bL19 (Kocuria rhizophila (strain ATCC 9341 / DSM 348 / NBRC 103217 / DC2201)).